We begin with the raw amino-acid sequence, 309 residues long: Maintenance of mitochondrial morphology protein 1 (309 aa).

The Lumenal portion of the chain corresponds to 1 to 16 (MGNAYIFSLQPTFTQG). A helical transmembrane segment spans residues 17–37 (LILGQFSILFLLVLVLKYLFF). The Cytoplasmic portion of the chain corresponds to 38 to 309 (DTVSDHAYRT…EQQAGELPVN (272 aa)). The region spanning 84–293 (ECESADWLNA…LPGLASVSEV (210 aa)) is the SMP-LTD domain.

Belongs to the MMM1 family. In terms of assembly, homodimer. Component of the ER-mitochondria encounter structure (ERMES) or MDM complex, composed of MMM1, MDM10, MDM12 and MDM34. An MMM1 homodimer associates with one molecule of MDM12 on each side in a pairwise head-to-tail manner, and the SMP-LTD domains of MMM1 and MDM12 generate a continuous hydrophobic tunnel for phospholipid trafficking.

It is found in the endoplasmic reticulum membrane. In terms of biological role, component of the ERMES/MDM complex, which serves as a molecular tether to connect the endoplasmic reticulum (ER) and mitochondria. Components of this complex are involved in the control of mitochondrial shape and protein biogenesis, and function in nonvesicular lipid trafficking between the ER and mitochondria. The MDM12-MMM1 subcomplex functions in the major beta-barrel assembly pathway that is responsible for biogenesis of all outer membrane beta-barrel proteins, and acts in a late step after the SAM complex. The MDM10-MDM12-MMM1 subcomplex further acts in the TOM40-specific pathway after the action of the MDM12-MMM1 complex. Essential for establishing and maintaining the structure of mitochondria and maintenance of mtDNA nucleoids. The chain is Maintenance of mitochondrial morphology protein 1 from Postia placenta (strain ATCC 44394 / Madison 698-R) (Brown rot fungus).